Here is a 153-residue protein sequence, read N- to C-terminus: Actin-related protein 2/3 complex subunit 5-like protein (153 aa).

Ser64 is modified (phosphoserine).

The protein belongs to the ARPC5 family. In terms of assembly, may be a component of the Arp2/3 complex in which it may replace ARPC5.

It is found in the cytoplasm. The protein localises to the cytoskeleton. In terms of biological role, may function as component of the Arp2/3 complex which is involved in regulation of actin polymerization and together with an activating nucleation-promoting factor (NPF) mediates the formation of branched actin networks. In Pongo abelii (Sumatran orangutan), this protein is Actin-related protein 2/3 complex subunit 5-like protein (ARPC5L).